The chain runs to 710 residues: Protein phosphatase 1 regulatory subunit 37 (710 aa).

Positions Met1–Pro12 are enriched in pro residues. A disordered region spans residues Met1–Ala46. The span at Ala16–Pro26 shows a compositional bias: acidic residues. Low complexity predominate over residues Ala27 to Pro38. 2 positions are modified to phosphoserine: Ser54 and Ser60. 5 LRR repeats span residues Ser224–Ala244, Asn252–Gly273, Ser281–Cys301, Gly310–Gly330, and Ser338–Lys358. Positions Pro487–Ser677 are disordered. The span at Ser512–Ser531 shows a compositional bias: acidic residues. A compositionally biased stretch (low complexity) spans Ser543–Pro565. At Ser581 the chain carries Phosphoserine. Residues Pro603 to Pro624 show a composition bias toward pro residues. A compositionally biased stretch (polar residues) spans Ser637–Gly649. Low complexity predominate over residues Leu656 to Gly676.

It belongs to the PPP1R37 family. In terms of assembly, interacts with PPP1CA.

Inhibits phosphatase activity of protein phosphatase 1 (PP1) complexes. This is Protein phosphatase 1 regulatory subunit 37 (Ppp1r37) from Rattus norvegicus (Rat).